The following is a 215-amino-acid chain: Protein NETWORKED 3B (215 aa).

Positions 5–90 constitute an NAB domain; the sequence is SKWWWIGANH…QKHDLLIKTS (86 aa). A coiled-coil region spans residues 134–165; that stretch reads DETMKEELEILREENRVYKEKKEVVTRLLANL.

The protein belongs to the NET family. As to quaternary structure, interacts with F-actin.

Plant-specific actin binding protein. May be part of a membrane-cytoskeletal adapter complex. The sequence is that of Protein NETWORKED 3B from Arabidopsis thaliana (Mouse-ear cress).